A 1245-amino-acid chain; its full sequence is Trafficking protein particle complex II-specific subunit 130 homolog (1245 aa).

Disordered regions lie at residues 488–524 and 884–903; these read GDGSGLDANSKPSPNKSASNYMARTMSGPATSETSLP and HVGGTDASKTSSSSTDTRKV. Composition is skewed to low complexity over residues 495-507 and 888-898; these read ANSKPSPNKSASN and TDASKTSSSST.

The protein belongs to the TMEM1 family. In terms of assembly, part of the multisubunit TRAPP (transport protein particle) II complex composed of BET3, BET5, TRS20, TRS23, TRS31, TRS33, TRS65, TRS85, TRS120 and TRS130.

Its subcellular location is the golgi apparatus. It is found in the trans-Golgi network. It localises to the early endosome. In terms of biological role, specific subunit of the TRAPP II complex, a highly conserved vesicle tethering complex that is required for the proper transport of proteins in post-Golgi trafficking pathways to the growing cell plate in mitotic active cells. The protein is Trafficking protein particle complex II-specific subunit 130 homolog of Oryza sativa subsp. japonica (Rice).